We begin with the raw amino-acid sequence, 91 residues long: Small ribosomal subunit protein uS15 (91 aa).

The protein belongs to the universal ribosomal protein uS15 family. Part of the 30S ribosomal subunit. Forms a bridge to the 50S subunit in the 70S ribosome, contacting the 23S rRNA.

Its function is as follows. One of the primary rRNA binding proteins, it binds directly to 16S rRNA where it helps nucleate assembly of the platform of the 30S subunit by binding and bridging several RNA helices of the 16S rRNA. Functionally, forms an intersubunit bridge (bridge B4) with the 23S rRNA of the 50S subunit in the ribosome. This Synechococcus sp. (strain JA-2-3B'a(2-13)) (Cyanobacteria bacterium Yellowstone B-Prime) protein is Small ribosomal subunit protein uS15.